A 733-amino-acid chain; its full sequence is Methylmalonyl-CoA mutase large subunit (733 aa).

The segment covering 1–10 (MRIPEFDDIE) has biased composition (acidic residues). The disordered stretch occupies residues 1–22 (MRIPEFDDIELGAGGGPSGSAE). Positions 78, 81, 88, 90, 92, and 117 each coordinate (R)-methylmalonyl-CoA. Phenylalanine 120 and alanine 142 together coordinate cob(II)alamin. 2 residues coordinate (R)-methylmalonyl-CoA: threonine 198 and glutamine 200. Cob(II)alamin is bound by residues valine 209 and arginine 210. Residues arginine 210, histidine 247, arginine 286, and serine 288 each contribute to the (R)-methylmalonyl-CoA site. Glycine 336, glutamate 373, alanine 376, glycine 612, histidine 613, aspartate 614, arginine 615, serine 658, leucine 660, glycine 689, and threonine 712 together coordinate cob(II)alamin. The 133-residue stretch at 600–732 (RPRILVAKMG…KRLAADLGHE (133 aa)) folds into the B12-binding domain.

The protein belongs to the methylmalonyl-CoA mutase family. Heterodimer of an alpha and a beta chain. Requires adenosylcob(III)alamin as cofactor.

It catalyses the reaction (R)-methylmalonyl-CoA = succinyl-CoA. Functionally, catalyzes the isomerization of succinyl-CoA to methylmalonyl-CoA during synthesis of propionate from tricarboxylic acid-cycle intermediates. This conversion most likely represents an important source of building blocks for polyketide antibiotic biosynthesis. It is unable to catalyze the conversion of isobutyryl-CoA into N-butyryl-CoA. This is Methylmalonyl-CoA mutase large subunit (mutB) from Streptomyces virginiae (Streptomyces cinnamonensis).